The primary structure comprises 183 residues: Large ribosomal subunit protein uL6 (183 aa).

It belongs to the universal ribosomal protein uL6 family. As to quaternary structure, part of the 50S ribosomal subunit.

This protein binds to the 23S rRNA, and is important in its secondary structure. It is located near the subunit interface in the base of the L7/L12 stalk, and near the tRNA binding site of the peptidyltransferase center. This chain is Large ribosomal subunit protein uL6, found in Parabacteroides distasonis (strain ATCC 8503 / DSM 20701 / CIP 104284 / JCM 5825 / NCTC 11152).